Consider the following 333-residue polypeptide: NADH-quinone oxidoreductase subunit H (333 aa).

8 helical membrane-spanning segments follow: residues 15–35, 88–108, 117–137, 159–179, 191–211, 250–270, 273–293, and 313–333; these read LVIFFGLGLALLFAVLAFVTY, FILAPIIAFAPAFMVLATLPF, IGVGLLYYIAVSGLTTIGVVA, ISYEIPLVVSVLGVVLLTGSL, VWYIFIQPIAFIVFFIAAVAE, LFAMAALTTILFLGGWHPVMF, FIPGAVWFALKFSIVVFVLIW, and VLFPVALLNIFVTALIQELFF.

Belongs to the complex I subunit 1 family. As to quaternary structure, NDH-1 is composed of 14 different subunits. Subunits NuoA, H, J, K, L, M, N constitute the membrane sector of the complex.

It is found in the cell membrane. It catalyses the reaction a quinone + NADH + 5 H(+)(in) = a quinol + NAD(+) + 4 H(+)(out). In terms of biological role, NDH-1 shuttles electrons from NADH, via FMN and iron-sulfur (Fe-S) centers, to quinones in the respiratory chain. The immediate electron acceptor for the enzyme in this species is believed to be ubiquinone. Couples the redox reaction to proton translocation (for every two electrons transferred, four hydrogen ions are translocated across the cytoplasmic membrane), and thus conserves the redox energy in a proton gradient. This subunit may bind ubiquinone. The sequence is that of NADH-quinone oxidoreductase subunit H from Geobacillus sp. (strain WCH70).